Consider the following 217-residue polypeptide: Trichothecene biosynthesis transcription regulator TRI6 (217 aa).

Residues 185–215 form a C2H2-type zinc finger; that stretch reads VRCPWHDQEGQQCLRVFSRVDNMRDHYRRIH.

Its subcellular location is the nucleus. Transcriptional activator of part of the core trichothecene biosynthesis cluster. This Fusarium sporotrichioides protein is Trichothecene biosynthesis transcription regulator TRI6.